Here is an 805-residue protein sequence, read N- to C-terminus: Leucine--tRNA ligase (805 aa).

Positions 40–51 (PYPSGQGLHVGH) match the 'HIGH' region motif. The 'KMSKS' region signature appears at 577–581 (KMSKS). Lys580 contacts ATP.

The protein belongs to the class-I aminoacyl-tRNA synthetase family.

Its subcellular location is the cytoplasm. The catalysed reaction is tRNA(Leu) + L-leucine + ATP = L-leucyl-tRNA(Leu) + AMP + diphosphate. The sequence is that of Leucine--tRNA ligase from Limosilactobacillus fermentum (strain NBRC 3956 / LMG 18251) (Lactobacillus fermentum).